The chain runs to 122 residues: Ribosome-binding factor A (122 aa).

Belongs to the RbfA family. Monomer. Binds 30S ribosomal subunits, but not 50S ribosomal subunits or 70S ribosomes.

It is found in the cytoplasm. In terms of biological role, one of several proteins that assist in the late maturation steps of the functional core of the 30S ribosomal subunit. Associates with free 30S ribosomal subunits (but not with 30S subunits that are part of 70S ribosomes or polysomes). Required for efficient processing of 16S rRNA. May interact with the 5'-terminal helix region of 16S rRNA. The polypeptide is Ribosome-binding factor A (Streptococcus agalactiae serotype III (strain NEM316)).